We begin with the raw amino-acid sequence, 259 residues long: MEGNCTAETTCHVTAVVRVPKYCNCFALCYEIPILWDDVLHRHEKLLFGGFTCNAGIELIVTKHCCLAEAQTWRVHCHCSNSLSLQCMASKHVVQKVIEDFIKGGAMNKKYMWYREFVNSSRPDEINYVGSIIFRNTHYIYFRLSFFRTVHKACMEAIKRCINPELGVVLKSTYNYWLVLKCKSCSLQNYCSLKNCAVWVRSVIVRVLKEVEKTPVVLHQTTSKAEERRQSALRQAMMHGRCRQIQNLCLVNLNAFLHF.

Belongs to the adenoviridae E4 30 to 34 kDa protein family. As to quaternary structure, interacts with E1B-55k.

Its subcellular location is the host nucleus. The protein resides in the host cytoplasm. Its function is as follows. Plays a major role to prevent cellular inhibition of viral genome replication by nuclear bodies. Assembles an SCF-like E3 ubiquitin ligase complex based on the cellular proteins ELOB, ELOC, CUL5 and RBX1, in cooperation with viral E1B-55K. This viral RING-type ligase ubiquitinates cellular substrates prior to proteasomal degradation: p53/TP53, LIG4, MRE11-RAD50-NBS1 (MRN) complex, ITGA3, DAXX and BLM. The chain is Early E4 30 kDa protein from Canine adenovirus serotype 2 (strain Toronto A 26-61) (CAdV-2).